Reading from the N-terminus, the 479-residue chain is F-box/LRR-repeat protein 16 (479 aa).

A disordered region spans residues 1 to 92 (MSSPGIDGDP…GPVSGPPVER (92 aa)). A compositionally biased stretch (pro residues) spans 47–60 (CQPPPPPTLPPPSL). Arg-92 is modified (omega-N-methylarginine). The region spanning 94 to 139 (PLATDEKILNGLFWYFSACEKCILAQVCKAWRRVLYQPKFWAGLTP) is the F-box domain. LRR repeat units lie at residues 321–342 (NLTS…ELVA), 347–369 (KLRS…YVAC), 373–394 (RLEE…SYLS), 398–419 (SLRS…KHLL), 423–444 (NLRL…SGLV), and 446–470 (LQEL…YFSQ).

As to quaternary structure, interacts with SKP1 and CUL1.

Substrate-recognition component of the SCF (SKP1-CUL1-F-box protein)-type E3 ubiquitin ligase complex. This is F-box/LRR-repeat protein 16 (Fbxl16) from Mus musculus (Mouse).